Reading from the N-terminus, the 576-residue chain is Probable vesicular glutamate transporter eat-4 (576 aa).

The Cytoplasmic portion of the chain corresponds to 1–69 (MSSWNEAWDR…QTWIGKCRKR (69 aa)). The tract at residues 25–46 (AAASATGAAPPQQMQEEGNENP) is disordered. A compositionally biased stretch (polar residues) spans 36-46 (QQMQEEGNENP). Residues 70-90 (WLLAILANMGFMISFGIRCNF) form a helical membrane-spanning segment. The Extracellular portion of the chain corresponds to 91–121 (GAAKTHMYKNYTDPYGKVHMHEFNWTIDELS). Asn-100 and Asn-114 each carry an N-linked (GlcNAc...) asparagine glycan. A helical membrane pass occupies residues 122-142 (VMESSYFYGYLVTQIPAGFLA). The Cytoplasmic portion of the chain corresponds to 143–150 (AKFPPNKL). Residues 151 to 171 (FGFGIGVGAFLNILLPYGFKV) traverse the membrane as a helical segment. Residues 172 to 174 (KSD) lie on the Extracellular side of the membrane. A helical transmembrane segment spans residues 175-195 (YLVAFIQITQGLVQGVCYPAM). The Cytoplasmic segment spans residues 196–213 (HGVWRYWAPPMERSKLAT). Residues 214–234 (TAFTGSYAGAVLGLPLSAFLV) form a helical membrane-spanning segment. Residues 235–239 (SYVSW) lie on the Extracellular side of the membrane. Residues 240–260 (AAPFYLYGVCGVIWAILWFCV) traverse the membrane as a helical segment. Residues 261-305 (TFEKPAFHPTISQEEKIFIEDAIGHVSNTHPTIRSIPWKAIVTSK) lie on the Cytoplasmic side of the membrane. Residues 306-325 (PVWAIIVANFARSWTFYLLL) form a helical membrane-spanning segment. Residues 326-344 (QNQLTYMKEALGMKIADSG) lie on the Extracellular side of the membrane. Residues 345–365 (LLAAIPHLVMGCVVLMGGQLA) form a helical membrane-spanning segment. Topologically, residues 366-381 (DYLRSNKILSTTAVRK) are cytoplasmic. The helical transmembrane segment at 382-402 (IFNCGGFGGEAAFMLIVAYTT) threads the bilayer. Residues 403–406 (SDTT) are Extracellular-facing. Residues 407–427 (AIMALIAAVGMSGFAISGFNV) traverse the membrane as a helical segment. The Cytoplasmic portion of the chain corresponds to 428–437 (NHLDIAPRYA). Residues 438–458 (AILMGFSNGIGTLAGLTCPFV) form a helical membrane-spanning segment. Residues 459–471 (TEAFTAHSKHGWT) are Extracellular-facing. The chain crosses the membrane as a helical span at residues 472 to 492 (SVFLLASLIHFTGVTFYAVYA). The Cytoplasmic segment spans residues 493-576 (SGELQEWAEP…VVENPHYQQW (84 aa)).

It belongs to the major facilitator superfamily. Sodium/anion cotransporter family. VGLUT subfamily. In terms of tissue distribution, expressed in neurons of the pharynx and the extrapharyngeal nervous system. Highly expressed in male PHC sensory neurons.

The protein localises to the cell membrane. The protein resides in the synapse. Functionally, required for glutamatergic synaptic transmission. In AWB and AWC sensory neurons, required for the detection of preferred food sources, probably via glutamatergic neurotransmission from sensory neurons. Negatively regulates the turning step of male mating behavior. This chain is Probable vesicular glutamate transporter eat-4, found in Caenorhabditis elegans.